The primary structure comprises 677 residues: Pre-mRNA-splicing factor CLF1 (677 aa).

HAT repeat units lie at residues 52-84 (EYQG…WELE), 86-118 (KEFR…AEMK), 120-152 (RNIN…MEEM), 154-185 (GNIP…LEKR), 187-218 (NEFD…FEEE), 220-255 (GTSD…YEAK), 257-291 (KEFE…FEKQ), 301-333 (VILS…LEES), 335-369 (GDVE…LWIF), 379-415 (KDME…FEIR), 417-448 (MDLQ…LERQ), 450-482 (FEFV…LERG), 484-518 (DDID…FEEY), 520-551 (GEYD…FEIN), 570-608 (EAKR…FEQT), and 613-646 (DDIA…YMFP).

This sequence belongs to the crooked-neck family. Associated with the spliceosome.

The protein resides in the nucleus. In terms of biological role, involved in pre-mRNA splicing and cell cycle progression. Required for the spliceosome assembly and initiation of the DNA replication. The protein is Pre-mRNA-splicing factor CLF1 (CLF1) of Paracoccidioides brasiliensis.